We begin with the raw amino-acid sequence, 265 residues long: MIKWPQKVQESAHQTALPWQEALSIPLLTCLTEQEQSKLVTLAERFLQQKRLVPLQGFELDSLRSCRIALLFCLPVLELGLEWLDGFHEVLIYPAPFVVDDEWEDDIGLVHNQRIVQSGQSWQQGPIVLNWLDIQDSFDASGFNLIIHEVAHKLDTRNGDRASGVPFIPLREVAGWEHDLHAAMNNIQEEIELVGENAASIDAYAASDPAECFAVLSEYFFSAPELFAPRFPSLWQRFCQFYQQDPLQRLHHANDTDSFSATNVH.

4 residues coordinate Zn(2+): His-111, His-148, His-152, and Glu-211.

It belongs to the MtfA family. As to quaternary structure, interacts with Mlc. It depends on Zn(2+) as a cofactor.

The protein resides in the cytoplasm. In terms of biological role, involved in the modulation of the activity of the glucose-phosphotransferase system (glucose-PTS). Interacts with the transcriptional repressor Mlc, preventing its interaction with DNA and leading to the modulation of expression of genes regulated by Mlc, including ptsG, which encodes the PTS system glucose-specific EIICB component. Shows zinc-dependent metallopeptidase activity. This is Mlc titration factor A from Shigella dysenteriae serotype 1 (strain Sd197).